A 443-amino-acid chain; its full sequence is Xaa-Pro dipeptidase (443 aa).

Mn(2+) contacts are provided by D246, D257, H339, E384, and E423.

Belongs to the peptidase M24B family. Bacterial-type prolidase subfamily. Requires Mn(2+) as cofactor.

It carries out the reaction Xaa-L-Pro dipeptide + H2O = an L-alpha-amino acid + L-proline. In terms of biological role, splits dipeptides with a prolyl residue in the C-terminal position. The polypeptide is Xaa-Pro dipeptidase (Shigella flexneri serotype 5b (strain 8401)).